A 217-amino-acid polypeptide reads, in one-letter code: Small ribosomal subunit protein eS6 (217 aa).

The protein belongs to the eukaryotic ribosomal protein eS6 family. Post-translationally, phosphorylated.

The protein is Small ribosomal subunit protein eS6 (RPS6) of Encephalitozoon cuniculi (strain GB-M1) (Microsporidian parasite).